The chain runs to 1193 residues: Nucleolar protein 6 (1193 aa).

Disordered stretches follow at residues 1–69 (MRFV…TKNV) and 1137–1193 (KREQ…KVLK). Composition is skewed to basic and acidic residues over residues 31–46 (AGDH…KIAK) and 1151–1161 (DANKAEEESKP). Residue S35 is modified to Phosphoserine. Positions 1162–1184 (KPKKHRQRKGTGKKALPKRKRLI) are enriched in basic residues.

It belongs to the NRAP family. In terms of assembly, part of the small subunit (SSU) processome, composed of more than 70 proteins and the RNA chaperone small nucleolar RNA (snoRNA) U3. As to expression, expressed in nurse cells at stages 9-10 of oogenesis and exported to the oocyte.

It localises to the nucleus. The protein localises to the nucleolus. It is found in the chromosome. Part of the small subunit (SSU) processome, first precursor of the small eukaryotic ribosomal subunit. During the assembly of the SSU processome in the nucleolus, many ribosome biogenesis factors, an RNA chaperone and ribosomal proteins associate with the nascent pre-rRNA and work in concert to generate RNA folding, modifications, rearrangements and cleavage as well as targeted degradation of pre-ribosomal RNA by the RNA exosome. This chain is Nucleolar protein 6, found in Drosophila melanogaster (Fruit fly).